The sequence spans 266 residues: Elongator complex protein 6 (266 aa).

The protein belongs to the ELP6 family. As to quaternary structure, component of the elongator complex which consists of ELP1, ELP2, ELP3, ELP4, ELP5 and ELP6.

The protein resides in the cytoplasm. It localises to the nucleus. The protein operates within tRNA modification; 5-methoxycarbonylmethyl-2-thiouridine-tRNA biosynthesis. Functionally, component of the elongator complex which is required for multiple tRNA modifications, including mcm5U (5-methoxycarbonylmethyl uridine), mcm5s2U (5-methoxycarbonylmethyl-2-thiouridine), and ncm5U (5-carbamoylmethyl uridine). The elongator complex catalyzes formation of carboxymethyluridine in the wobble base at position 34 in tRNAs. Involved in cell migration. The sequence is that of Elongator complex protein 6 from Homo sapiens (Human).